Here is a 91-residue protein sequence, read N- to C-terminus: Acylphosphatase (91 aa).

The region spanning 3 to 90 (RVSMIVSGQV…CGYSIFTIRR (88 aa)) is the Acylphosphatase-like domain. Catalysis depends on residues arginine 18 and asparagine 36.

This sequence belongs to the acylphosphatase family.

The catalysed reaction is an acyl phosphate + H2O = a carboxylate + phosphate + H(+). This is Acylphosphatase (acyP) from Methanospirillum hungatei JF-1 (strain ATCC 27890 / DSM 864 / NBRC 100397 / JF-1).